Here is a 235-residue protein sequence, read N- to C-terminus: Protein C1orf43 homolog (235 aa).

Residues 11–31 (VNVVLVMAYGSLVFVLLFIFV) traverse the membrane as a helical segment.

It is found in the membrane. The protein resides in the golgi apparatus. It localises to the mitochondrion. General regulator of phagocytosis. Required to uptake Gram negative bacterium by macrophages. The sequence is that of Protein C1orf43 homolog from Rattus norvegicus (Rat).